Consider the following 258-residue polypeptide: MGKTVVIKCGGSVLDELSPAFFASVRTMREQGMDVVIVHGGGPEIGQMLKKLAVPSEFVNGLRKTTKEVLAVVEMVLSGKVNKQLVAMLRQNGLPAVGVSGVDGGLLEAEPIDFAKLGYVGRVKTVRSRLLRTLLEAGYIPVVSPLGIDQNGQTYNINADTAAGAVAAAIGASQLAFVTNVPGILRDGALVAEATAETIERLIEDGVITGGMIPKVKAALSALSDALPEVMIVSGKTTFYQNGTWHGTTIRKEVGVYL.

Residues 41–42, arginine 63, and asparagine 156 contribute to the substrate site; that span reads GG.

Belongs to the acetylglutamate kinase family. ArgB subfamily.

The protein resides in the cytoplasm. It catalyses the reaction N-acetyl-L-glutamate + ATP = N-acetyl-L-glutamyl 5-phosphate + ADP. Its pathway is amino-acid biosynthesis; L-arginine biosynthesis; N(2)-acetyl-L-ornithine from L-glutamate: step 2/4. In terms of biological role, catalyzes the ATP-dependent phosphorylation of N-acetyl-L-glutamate. This Geobacillus kaustophilus (strain HTA426) protein is Acetylglutamate kinase.